A 495-amino-acid chain; its full sequence is UDP-glycosyltransferase 73C6 (495 aa).

UDP-alpha-D-glucose contacts are provided by residues serine 296, 356-358 (SPQ), 373-381 (HCGWNSTLE), and 395-398 (FADQ). Residues 449–475 (SDDAKERRRRAKELGESAHKAVEEGGS) form a disordered region. The segment covering 450–471 (DDAKERRRRAKELGESAHKAVE) has biased composition (basic and acidic residues).

Belongs to the UDP-glycosyltransferase family. In terms of tissue distribution, expressed in leaves and flowers, and at a very low level in roots.

Acts as a UDP-glucose:flavonol-3-O-glycoside-7-O-glucosyltransferase. 6- and 7-hydroxyflavone, but not 3- or 5-hydroxyflavone are accepted as substrates. Possesses low quercetin 3-O-glucosyltransferase, 7-O-glucosyltransferase and 4'-O-glucosyltransferase activities in vitro. The protein is UDP-glycosyltransferase 73C6 (UGT73C6) of Arabidopsis thaliana (Mouse-ear cress).